Consider the following 359-residue polypeptide: Halocin-H4 (359 aa).

The N-terminal stretch at 1-46 (MSKDRDGRRTSRRGTLKKIGGFSLGALSFGAVGRTQAATGSSVTTA) is a signal peptide. 2 disordered regions span residues 40 to 59 (GSSV…DPKS) and 340 to 359 (IPDR…SRKQ).

Its subcellular location is the secreted. Functionally, has antibacterial activity against other haloarchaeons. Interacts with the membrane of the target cells where it causes permeability changes that result in an ionic imbalance leading to cell lysis and death. In Haloferax mediterranei (strain ATCC 33500 / DSM 1411 / JCM 8866 / NBRC 14739 / NCIMB 2177 / R-4) (Halobacterium mediterranei), this protein is Halocin-H4 (halH4).